The chain runs to 219 residues: Large ribosomal subunit protein mL67 (219 aa).

This sequence belongs to the mitochondrion-specific ribosomal protein mL67 family.

It localises to the nucleus. It is found in the mitochondrion. In terms of biological role, transcription factor involved in regulation of RNA polymerase II-dependent transcription. Also involved in regulation of mitochondrial DNA recombination, maintenance and repair, and generation of homoplasmic cells. The chain is Large ribosomal subunit protein mL67 (MHR1) from Kluyveromyces lactis (strain ATCC 8585 / CBS 2359 / DSM 70799 / NBRC 1267 / NRRL Y-1140 / WM37) (Yeast).